Reading from the N-terminus, the 264-residue chain is Thymidylate synthase (264 aa).

A dUMP-binding site is contributed by arginine 21. Histidine 51 contributes to the (6R)-5,10-methylene-5,6,7,8-tetrahydrofolate binding site. 126 to 127 is a dUMP binding site; the sequence is RR. Cysteine 146 serves as the catalytic Nucleophile. Residues 166–169, asparagine 177, and 207–209 each bind dUMP; these read RSCD and HLY. Aspartate 169 is a binding site for (6R)-5,10-methylene-5,6,7,8-tetrahydrofolate. (6R)-5,10-methylene-5,6,7,8-tetrahydrofolate is bound at residue alanine 263.

The protein belongs to the thymidylate synthase family. Bacterial-type ThyA subfamily. Homodimer.

It localises to the cytoplasm. It carries out the reaction dUMP + (6R)-5,10-methylene-5,6,7,8-tetrahydrofolate = 7,8-dihydrofolate + dTMP. Its pathway is pyrimidine metabolism; dTTP biosynthesis. In terms of biological role, catalyzes the reductive methylation of 2'-deoxyuridine-5'-monophosphate (dUMP) to 2'-deoxythymidine-5'-monophosphate (dTMP) while utilizing 5,10-methylenetetrahydrofolate (mTHF) as the methyl donor and reductant in the reaction, yielding dihydrofolate (DHF) as a by-product. This enzymatic reaction provides an intracellular de novo source of dTMP, an essential precursor for DNA biosynthesis. The chain is Thymidylate synthase from Sodalis glossinidius (strain morsitans).